The chain runs to 687 residues: Polyphosphate kinase (687 aa).

Asn45 contacts ATP. Mg(2+) contacts are provided by Arg375 and Arg405. His435 acts as the Phosphohistidine intermediate in catalysis. ATP is bound by residues Tyr472, Arg568, and His596.

It belongs to the polyphosphate kinase 1 (PPK1) family. The cofactor is Mg(2+). An intermediate of this reaction is the autophosphorylated ppk in which a phosphate is covalently linked to a histidine residue through a N-P bond.

It carries out the reaction [phosphate](n) + ATP = [phosphate](n+1) + ADP. Functionally, catalyzes the reversible transfer of the terminal phosphate of ATP to form a long-chain polyphosphate (polyP). This Burkholderia lata (strain ATCC 17760 / DSM 23089 / LMG 22485 / NCIMB 9086 / R18194 / 383) protein is Polyphosphate kinase.